The chain runs to 446 residues: Trigger factor (446 aa).

The region spanning 161-246 (GDRLTIDFKG…VSKVERSELP (86 aa)) is the PPIase FKBP-type domain. The disordered stretch occupies residues 422–446 (VSYEDAVKPRTAPAEQAEDGEQSAE). Positions 437-446 (QAEDGEQSAE) are enriched in acidic residues.

This sequence belongs to the FKBP-type PPIase family. Tig subfamily.

It is found in the cytoplasm. The catalysed reaction is [protein]-peptidylproline (omega=180) = [protein]-peptidylproline (omega=0). In terms of biological role, involved in protein export. Acts as a chaperone by maintaining the newly synthesized protein in an open conformation. Functions as a peptidyl-prolyl cis-trans isomerase. The sequence is that of Trigger factor from Hahella chejuensis (strain KCTC 2396).